The sequence spans 350 residues: MIRVLLVDDSPVTLMVLQSILEKEPDISVIGQAKNGKEAIILASRLAPDIITMDINMPDLDGFATTRQIMERTPVPIIIVSGIDNLEEIRASFRAVEAGALAVFRKPPAYGDPDYEEAVSEFVNAIRTYSEVKVIRRRSNHLKVPKPEASTIQIPFQIHQDIRVIVIGASTGGPQVIQEIISNLPLGFPLPLVLVQHMSPGFIEGLALWLTESTGFPVSIAREGEVLQPGKLYVAPDGIHTGVTSDLRFSFSISPPEHNLRPSVSYLFRSAAKNLGSHVLGILLSGMGSDGAEELLQIRQNGGCTIIQDRDSSFVYGMPGAAEMLNAGMFSLPPVEIARFLRSLSERRQL.

Residues 3-121 form the Response regulatory domain; that stretch reads RVLLVDDSPV…DPDYEEAVSE (119 aa). Residue Asp54 is modified to 4-aspartylphosphate. The CheB-type methylesterase domain occupies 158-322; sequence IHQDIRVIVI…SFVYGMPGAA (165 aa). Active-site residues include Ser170, His197, and Asp290.

The protein belongs to the CheB family. Phosphorylated by CheA. Phosphorylation of the N-terminal regulatory domain activates the methylesterase activity.

It is found in the cytoplasm. The catalysed reaction is [protein]-L-glutamate 5-O-methyl ester + H2O = L-glutamyl-[protein] + methanol + H(+). The enzyme catalyses L-glutaminyl-[protein] + H2O = L-glutamyl-[protein] + NH4(+). In terms of biological role, involved in chemotaxis. Part of a chemotaxis signal transduction system that modulates chemotaxis in response to various stimuli. Catalyzes the demethylation of specific methylglutamate residues introduced into the chemoreceptors (methyl-accepting chemotaxis proteins or MCP) by CheR. Also mediates the irreversible deamidation of specific glutamine residues to glutamic acid. The protein is Protein-glutamate methylesterase/protein-glutamine glutaminase 2 of Methanospirillum hungatei JF-1 (strain ATCC 27890 / DSM 864 / NBRC 100397 / JF-1).